The sequence spans 273 residues: Glutamate 5-kinase (273 aa).

Lys-15 lines the ATP pocket. The substrate site is built by Ser-55, Asp-142, and Asn-158. Residues 178–179 (SD) and 220–226 (TGGMLSK) each bind ATP.

Belongs to the glutamate 5-kinase family.

It is found in the cytoplasm. It carries out the reaction L-glutamate + ATP = L-glutamyl 5-phosphate + ADP. It participates in amino-acid biosynthesis; L-proline biosynthesis; L-glutamate 5-semialdehyde from L-glutamate: step 1/2. Catalyzes the transfer of a phosphate group to glutamate to form L-glutamate 5-phosphate. This chain is Glutamate 5-kinase, found in Streptococcus pyogenes serotype M2 (strain MGAS10270).